The following is a 194-amino-acid chain: uncharacterized protein (194 aa).

This is an uncharacterized protein from Gallus gallus (Chicken).